We begin with the raw amino-acid sequence, 351 residues long: Uroporphyrinogen decarboxylase (351 aa).

Residues 25–29 (RQAGR), Asp74, Tyr151, Ser206, and His325 each bind substrate.

It belongs to the uroporphyrinogen decarboxylase family. As to quaternary structure, homodimer.

The protein localises to the cytoplasm. The enzyme catalyses uroporphyrinogen III + 4 H(+) = coproporphyrinogen III + 4 CO2. Its pathway is porphyrin-containing compound metabolism; protoporphyrin-IX biosynthesis; coproporphyrinogen-III from 5-aminolevulinate: step 4/4. Its function is as follows. Catalyzes the decarboxylation of four acetate groups of uroporphyrinogen-III to yield coproporphyrinogen-III. This is Uroporphyrinogen decarboxylase from Chlorobium chlorochromatii (strain CaD3).